A 71-amino-acid polypeptide reads, in one-letter code: Protein translocase subunit SecE (71 aa).

A helical membrane pass occupies residues 43–63 (VAGAGILAVGAIGFIIYVLLT).

This sequence belongs to the SecE/SEC61-gamma family. Component of the Sec protein translocase complex. Heterotrimer consisting of SecY (alpha), SecG (beta) and SecE (gamma) subunits. The heterotrimers can form oligomers, although 1 heterotrimer is thought to be able to translocate proteins. Interacts with the ribosome. May interact with SecDF, and other proteins may be involved.

Its subcellular location is the cell membrane. Essential subunit of the Sec protein translocation channel SecYEG. Clamps together the 2 halves of SecY. May contact the channel plug during translocation. The sequence is that of Protein translocase subunit SecE from Methanosarcina acetivorans (strain ATCC 35395 / DSM 2834 / JCM 12185 / C2A).